The following is a 378-amino-acid chain: Putative F-box/kelch-repeat protein At3g43710 (378 aa).

An F-box domain is found at 23–69 (TFGIEMLPDDLVLSCLARVPRMYYPILSLVSKRFRSFLTSTELYQTR). 3 Kelch repeats span residues 130-176 (NIYV…VLDG), 178-227 (IYVA…GYDG), and 262-308 (SQCV…VPTK).

This chain is Putative F-box/kelch-repeat protein At3g43710, found in Arabidopsis thaliana (Mouse-ear cress).